Consider the following 468-residue polypeptide: Abscisic acid 8'-hydroxylase 4 (468 aa).

The helical transmembrane segment at 4–24 threads the bilayer; the sequence is IWFLVVPILILCLLLVRVIVS. C415 contacts heme.

It belongs to the cytochrome P450 family. Requires heme as cofactor. As to expression, mainly expressed in flowers. Lower expression in siliques, rosette leaves, roots and stems. Not expressed in dry seeds. Expressed in silique envelopes, but not in embryo or endosperm during the seed development.

The protein resides in the membrane. It carries out the reaction 2-cis-(+)-abscisate + reduced [NADPH--hemoprotein reductase] + O2 = (+)-8'-hydroxyabscisate + oxidized [NADPH--hemoprotein reductase] + H2O + H(+). It functions in the pathway plant hormone degradation; abscisic acid degradation. In terms of biological role, involved in the oxidative degradation of abscisic acid, but not in the isomerization of the produced 8'-hydroxyabscisic acid (8'-OH-ABA) to (-)-phaseic acid (PA). This is Abscisic acid 8'-hydroxylase 4 (CYP707A4) from Arabidopsis thaliana (Mouse-ear cress).